Consider the following 121-residue polypeptide: Replication protein A 14 kDa subunit (121 aa).

Val-2 is modified (N-acetylvaline). Residues Lys-23, Lys-39, and Lys-88 each participate in a glycyl lysine isopeptide (Lys-Gly) (interchain with G-Cter in ubiquitin) cross-link.

It belongs to the replication factor A protein 3 family. As to quaternary structure, component of the canonical replication protein A complex (RPA), a heterotrimer composed of RPA1, RPA2 and RPA3. Also a component of the aRPA, the alternative replication protein A complex, a trimeric complex similar to the replication protein A complex/RPA but where RPA1 and RPA3 are associated with RPA4 instead of RPA2. Interacts with BRIP1/FANCJ via the RPA1 subunit; following DNA damage they colocalize in foci in the nucleus. Post-translationally, ubiquitinated by RFWD3 at stalled replication forks in response to DNA damage: ubiquitination by RFWD3 does not lead to degradation by the proteasome and promotes removal of the RPA complex from stalled replication forks, promoting homologous recombination.

It localises to the nucleus. As part of the heterotrimeric replication protein A complex (RPA/RP-A), binds and stabilizes single-stranded DNA intermediates that form during DNA replication or upon DNA stress. It prevents their reannealing and in parallel, recruits and activates different proteins and complexes involved in DNA metabolism. Thereby, it plays an essential role both in DNA replication and the cellular response to DNA damage. In the cellular response to DNA damage, the RPA complex controls DNA repair and DNA damage checkpoint activation. Through recruitment of ATRIP activates the ATR kinase a master regulator of the DNA damage response. It is required for the recruitment of the DNA double-strand break repair factors RAD51 and RAD52 to chromatin, in response to DNA damage. Also recruits to sites of DNA damage proteins like XPA and XPG that are involved in nucleotide excision repair and is required for this mechanism of DNA repair. Also plays a role in base excision repair (BER), probably through interaction with UNG. RPA stimulates 5'-3' helicase activity of BRIP1/FANCJ. Also recruits SMARCAL1/HARP, which is involved in replication fork restart, to sites of DNA damage. May also play a role in telomere maintenance. RPA3 has its own single-stranded DNA-binding activity and may be responsible for polarity of the binding of the complex to DNA. As part of the alternative replication protein A complex, aRPA, binds single-stranded DNA and probably plays a role in DNA repair. Compared to the RPA2-containing, canonical RPA complex, may not support chromosomal DNA replication and cell cycle progression through S-phase. The aRPA may not promote efficient priming by DNA polymerase alpha but could support DNA synthesis by polymerase delta in presence of PCNA and replication factor C (RFC), the dual incision/excision reaction of nucleotide excision repair and RAD51-dependent strand exchange. The polypeptide is Replication protein A 14 kDa subunit (RPA3) (Homo sapiens (Human)).